The chain runs to 366 residues: Eukaryotic translation initiation factor 3 subunit H (366 aa).

One can recognise an MPN domain in the interval 12 to 161; that stretch reads VKVEALVVMK…LRAFRLSPKF (150 aa).

It belongs to the eIF-3 subunit H family. In terms of assembly, component of the eukaryotic translation initiation factor 3 (eIF-3) complex.

The protein resides in the cytoplasm. In terms of biological role, component of the eukaryotic translation initiation factor 3 (eIF-3) complex, which is involved in protein synthesis of a specialized repertoire of mRNAs and, together with other initiation factors, stimulates binding of mRNA and methionyl-tRNAi to the 40S ribosome. The eIF-3 complex specifically targets and initiates translation of a subset of mRNAs involved in cell proliferation. This is Eukaryotic translation initiation factor 3 subunit H from Emericella nidulans (strain FGSC A4 / ATCC 38163 / CBS 112.46 / NRRL 194 / M139) (Aspergillus nidulans).